The following is a 240-amino-acid chain: Uridylate kinase (240 aa).

12-15 (KLSG) lines the ATP pocket. The segment at 20–25 (GEKGFG) is involved in allosteric activation by GTP. UMP is bound at residue glycine 54. Positions 55 and 59 each coordinate ATP. Residues aspartate 74 and 135–142 (TGSPYFST) each bind UMP. ATP contacts are provided by asparagine 163, tyrosine 169, and aspartate 172.

Belongs to the UMP kinase family. Homohexamer.

The protein localises to the cytoplasm. The catalysed reaction is UMP + ATP = UDP + ADP. Its pathway is pyrimidine metabolism; CTP biosynthesis via de novo pathway; UDP from UMP (UMPK route): step 1/1. Its activity is regulated as follows. Allosterically activated by GTP. Inhibited by UTP. Its function is as follows. Catalyzes the reversible phosphorylation of UMP to UDP. The polypeptide is Uridylate kinase (Lactiplantibacillus plantarum (strain ATCC BAA-793 / NCIMB 8826 / WCFS1) (Lactobacillus plantarum)).